The sequence spans 426 residues: Serine--tRNA ligase (426 aa).

230–232 contacts L-serine; it reads TAE. 261 to 263 is a binding site for ATP; it reads RSE. Glu284 lines the L-serine pocket. 348–351 lines the ATP pocket; the sequence is EISS. Ser384 provides a ligand contact to L-serine.

This sequence belongs to the class-II aminoacyl-tRNA synthetase family. Type-1 seryl-tRNA synthetase subfamily. As to quaternary structure, homodimer. The tRNA molecule binds across the dimer.

The protein resides in the cytoplasm. The enzyme catalyses tRNA(Ser) + L-serine + ATP = L-seryl-tRNA(Ser) + AMP + diphosphate + H(+). The catalysed reaction is tRNA(Sec) + L-serine + ATP = L-seryl-tRNA(Sec) + AMP + diphosphate + H(+). Its pathway is aminoacyl-tRNA biosynthesis; selenocysteinyl-tRNA(Sec) biosynthesis; L-seryl-tRNA(Sec) from L-serine and tRNA(Sec): step 1/1. In terms of biological role, catalyzes the attachment of serine to tRNA(Ser). Is also able to aminoacylate tRNA(Sec) with serine, to form the misacylated tRNA L-seryl-tRNA(Sec), which will be further converted into selenocysteinyl-tRNA(Sec). This is Serine--tRNA ligase from Streptococcus mutans serotype c (strain ATCC 700610 / UA159).